Consider the following 493-residue polypeptide: 3-octaprenyl-4-hydroxybenzoate carboxy-lyase (493 aa).

Asn-172 lines the Mn(2+) pocket. Residues Ile-175–Arg-177, Arg-189–Leu-191, and Arg-194–Gly-195 each bind prenylated FMN. Glu-238 serves as a coordination point for Mn(2+). The Proton donor role is filled by Asp-287.

Belongs to the UbiD family. Homohexamer. Prenylated FMN serves as cofactor. The cofactor is Mn(2+).

It is found in the cell membrane. It carries out the reaction a 4-hydroxy-3-(all-trans-polyprenyl)benzoate + H(+) = a 2-(all-trans-polyprenyl)phenol + CO2. It functions in the pathway cofactor biosynthesis; ubiquinone biosynthesis. Its function is as follows. Catalyzes the decarboxylation of 3-octaprenyl-4-hydroxy benzoate to 2-octaprenylphenol, an intermediate step in ubiquinone biosynthesis. This chain is 3-octaprenyl-4-hydroxybenzoate carboxy-lyase, found in Shewanella sp. (strain ANA-3).